The primary structure comprises 262 residues: Small ribosomal subunit protein uS2 (262 aa).

The tract at residues 224-246 (GNQGEDQDDAQEQQVAADKKADS) is disordered.

Belongs to the universal ribosomal protein uS2 family.

The protein is Small ribosomal subunit protein uS2 of Lacticaseibacillus casei (strain BL23) (Lactobacillus casei).